We begin with the raw amino-acid sequence, 65 residues long: Large ribosomal subunit protein bL35 (65 aa).

The protein belongs to the bacterial ribosomal protein bL35 family.

In Enterobacter sp. (strain 638), this protein is Large ribosomal subunit protein bL35.